The following is a 270-amino-acid chain: Tetraspanin-2 (270 aa).

Topologically, residues 1-8 (MALANNLT) are cytoplasmic. A helical transmembrane segment spans residues 9–29 (AILNLLALLCSIPITASGIWL). The Extracellular portion of the chain corresponds to 30–42 (ASKPDNECVNLLR). Residues 43 to 63 (WPVVVLGVLILVVSATGFIGA) traverse the membrane as a helical segment. Residues 64–74 (YKYKETLLAVY) lie on the Cytoplasmic side of the membrane. Residues 75-95 (LCCMAILIGLLLVVLIFAFVV) form a helical membrane-spanning segment. The Extracellular portion of the chain corresponds to 96 to 232 (TRPDGSYRVP…NLRKEWRKAN (137 aa)). The helical transmembrane segment at 233 to 253 (LILIITVVVLIWVYVIACSAF) threads the bilayer. Over 254–270 (RNAQTEDLFRKYKQGWV) the chain is Cytoplasmic.

It belongs to the tetraspanin (TM4SF) family.

The protein localises to the membrane. Functionally, may be involved in the regulation of cell differentiation. The chain is Tetraspanin-2 (TET2) from Arabidopsis thaliana (Mouse-ear cress).